We begin with the raw amino-acid sequence, 197 residues long: Thymidine kinase (197 aa).

ATP contacts are provided by residues Gly15–Thr22 and Asp93–Gln96. Glu94 functions as the Proton acceptor in the catalytic mechanism. Positions 150, 153, 188, and 191 each coordinate Zn(2+).

The protein belongs to the thymidine kinase family. In terms of assembly, homotetramer.

Its subcellular location is the cytoplasm. The enzyme catalyses thymidine + ATP = dTMP + ADP + H(+). This chain is Thymidine kinase, found in Thermococcus kodakarensis (strain ATCC BAA-918 / JCM 12380 / KOD1) (Pyrococcus kodakaraensis (strain KOD1)).